Consider the following 274-residue polypeptide: Large ribosomal subunit protein uL2 (274 aa).

The interval 195–274 is disordered; it reads VGNSDHGLES…SKYIIERRKK (80 aa). Composition is skewed to basic residues over residues 209–220 and 244–264; these read GRSRWQGRRPRN and PRSRKGLYAKGLKTRAPKKQS.

This sequence belongs to the universal ribosomal protein uL2 family. Part of the 50S ribosomal subunit. Forms a bridge to the 30S subunit in the 70S ribosome.

Functionally, one of the primary rRNA binding proteins. Required for association of the 30S and 50S subunits to form the 70S ribosome, for tRNA binding and peptide bond formation. It has been suggested to have peptidyltransferase activity; this is somewhat controversial. Makes several contacts with the 16S rRNA in the 70S ribosome. The polypeptide is Large ribosomal subunit protein uL2 (Bacteroides fragilis (strain ATCC 25285 / DSM 2151 / CCUG 4856 / JCM 11019 / LMG 10263 / NCTC 9343 / Onslow / VPI 2553 / EN-2)).